A 236-amino-acid chain; its full sequence is Orotidine 5'-phosphate decarboxylase (236 aa).

Substrate contacts are provided by residues D13, K35, 62–71, T123, R184, Q193, G213, and R214; that span reads DLKFYDIPQT. K64 serves as the catalytic Proton donor.

It belongs to the OMP decarboxylase family. Type 1 subfamily. As to quaternary structure, homodimer.

It carries out the reaction orotidine 5'-phosphate + H(+) = UMP + CO2. It functions in the pathway pyrimidine metabolism; UMP biosynthesis via de novo pathway; UMP from orotate: step 2/2. Catalyzes the decarboxylation of orotidine 5'-monophosphate (OMP) to uridine 5'-monophosphate (UMP). In Coxiella burnetii (strain CbuK_Q154) (Coxiella burnetii (strain Q154)), this protein is Orotidine 5'-phosphate decarboxylase.